We begin with the raw amino-acid sequence, 334 residues long: L-lactate dehydrogenase B chain (334 aa).

Residue Ala-2 is modified to N-acetylalanine. N6-acetyllysine is present on Lys-7. Residue Ser-44 is modified to Phosphoserine. Residues 53-58 and Arg-100 contribute to the NAD(+) site; that span reads DVLEDK. Lys-58 carries the N6-acetyllysine modification. Arg-107 lines the substrate pocket. The residue at position 119 (Lys-119) is an N6-acetyllysine. Asn-139 serves as a coordination point for NAD(+). The substrate site is built by Asn-139 and Arg-170. The Proton acceptor role is filled by His-194. Tyr-240 is subject to Phosphotyrosine. Thr-249 serves as a coordination point for substrate. At Lys-329 the chain carries N6-acetyllysine.

Belongs to the LDH/MDH superfamily. LDH family. Homotetramer. Interacts with PTEN upstream reading frame protein MP31; the interaction leads to inhibition of mitochondrial lactate dehydrogenase activity, preventing conversion of lactate to pyruvate in mitochondria.

The protein resides in the cytoplasm. It localises to the mitochondrion inner membrane. The enzyme catalyses (S)-lactate + NAD(+) = pyruvate + NADH + H(+). The protein operates within fermentation; pyruvate fermentation to lactate; (S)-lactate from pyruvate: step 1/1. In terms of biological role, interconverts simultaneously and stereospecifically pyruvate and lactate with concomitant interconversion of NADH and NAD(+). In Monodelphis domestica (Gray short-tailed opossum), this protein is L-lactate dehydrogenase B chain (LDHB).